The chain runs to 72 residues: Translation initiation factor IF-1 (72 aa).

Residues 1–72 (MAKEGAIEVE…TRGRIVYRYK (72 aa)) form the S1-like domain.

Belongs to the IF-1 family. In terms of assembly, component of the 30S ribosomal translation pre-initiation complex which assembles on the 30S ribosome in the order IF-2 and IF-3, IF-1 and N-formylmethionyl-tRNA(fMet); mRNA recruitment can occur at any time during PIC assembly.

The protein localises to the cytoplasm. In terms of biological role, one of the essential components for the initiation of protein synthesis. Stabilizes the binding of IF-2 and IF-3 on the 30S subunit to which N-formylmethionyl-tRNA(fMet) subsequently binds. Helps modulate mRNA selection, yielding the 30S pre-initiation complex (PIC). Upon addition of the 50S ribosomal subunit IF-1, IF-2 and IF-3 are released leaving the mature 70S translation initiation complex. This Corynebacterium efficiens (strain DSM 44549 / YS-314 / AJ 12310 / JCM 11189 / NBRC 100395) protein is Translation initiation factor IF-1.